The sequence spans 518 residues: Glutamate--cysteine ligase (518 aa).

It belongs to the glutamate--cysteine ligase type 1 family. Type 1 subfamily.

It catalyses the reaction L-cysteine + L-glutamate + ATP = gamma-L-glutamyl-L-cysteine + ADP + phosphate + H(+). It participates in sulfur metabolism; glutathione biosynthesis; glutathione from L-cysteine and L-glutamate: step 1/2. The polypeptide is Glutamate--cysteine ligase (Salmonella typhi).